We begin with the raw amino-acid sequence, 235 residues long: Protein LIFEGUARD 1 (235 aa).

Helical transmembrane passes span 33–53 (YSIL…VYFV), 67–87 (LAVF…LLAF), 95–115 (CIVL…CCSL), 120–140 (IVLE…IYTF), 149–169 (FSFL…FTLL), 178–198 (LSSM…IIFD), and 212–232 (ITAA…LLGI).

The protein belongs to the BI1 family. In terms of tissue distribution, expressed at very low in leaves.

Its subcellular location is the membrane. Functionally, (Microbial infection) Facilitates the development of the powdery mildew fungus E.cruciferarum. Its function is as follows. (Microbial infection) May prevent cell death upon A.alternata f.sp. lycopersici (AAL) toxin treatment. The sequence is that of Protein LIFEGUARD 1 from Arabidopsis thaliana (Mouse-ear cress).